Consider the following 660-residue polypeptide: Leucine-rich repeat transmembrane protein FLRT2 (660 aa).

The signal sequence occupies residues 1–35 (MGLQTTKWPGRGAFILKFWLIISLGLYLQVSKLLA). 2 cysteine pairs are disulfide-bonded: C36–C42 and C40–C49. Residues 36–63 (CPSVCRCDRNFVYCNERSLTSVPLGIPE) enclose the LRRNT domain. Residues 36 to 540 (CPSVCRCDRN…QTTSHSMGSP (505 aa)) lie on the Extracellular side of the membrane. LRR repeat units lie at residues 62 to 87 (PEGV…LHNV), 88 to 108 (QSVH…MNLP), 109 to 131 (KNVR…ALAQ), 132 to 157 (LLKL…AFRE), 159 to 181 (ISLK…LPVD), 183 to 202 (QELR…AFQN), 203 to 228 (LTSL…TFSH), 229 to 251 (LTKL…DLPG), 252 to 274 (THLI…AFAN), and 275 to 298 (LRKL…VFDH). An N-linked (GlcNAc...) asparagine glycan is attached at N202. In terms of domain architecture, LRRCT spans 310–362 (NPWFCDCSIKWVTEWLKYIPSSLNVRGFMCQGPEQVRGMAVRELNMNLLSCPT). 2 disulfides stabilise this stretch: C314–C339 and C316–C360. Positions 371–396 (TPAPSTVSPTTQSPTLSVPSPSRGSV) are enriched in low complexity. Positions 371 to 413 (TPAPSTVSPTTQSPTLSVPSPSRGSVPPAPTPSKLPTIPDWDG) are disordered. Residues 419-517 (PPISERIQLS…ICSEATTHAS (99 aa)) form the Fibronectin type-III domain. Residues 541 to 561 (FLLAGLIGGAVIFVLVVLLSV) form a helical membrane-spanning segment. The Cytoplasmic portion of the chain corresponds to 562 to 660 (FCWHMHKKGR…SVPDLEHCHT (99 aa)).

Self-associates (via leucine-rich repeats), giving rise to homooligomers. Interacts with FGFR1. Interacts with FGFR2. Interacts (via extracellular domain) with ADGRL1/LPHN1. Interacts (via extracellular domain) with ADGRL3 (via olfactomedin-like domain). Interacts (via extracellular domain) with UNC5D (via the first Ig-like domain). Can also interact (via extracellular domain) with UNC5B, but with much lower affinity. Interacts (via extracellular domain) with FN1. Post-translationally, N-glycosylated. In terms of processing, proteolytic cleavage in the juxtamembrane region gives rise to a soluble ectodomain. Cleavage is probably effected by a metalloprotease. In terms of tissue distribution, detected in adult brain (at protein level).

The protein resides in the cell membrane. The protein localises to the endoplasmic reticulum membrane. It localises to the cell junction. It is found in the focal adhesion. Its subcellular location is the secreted. The protein resides in the extracellular space. The protein localises to the extracellular matrix. It localises to the synapse. It is found in the synaptosome. Its subcellular location is the microsome membrane. Functionally, functions in cell-cell adhesion, cell migration and axon guidance. Mediates cell-cell adhesion via its interactions with ADGRL3 and probably also other latrophilins that are expressed at the surface of adjacent cells. May play a role in the migration of cortical neurons during brain development via its interaction with UNC5D. Mediates axon growth cone collapse and plays a repulsive role in neuron guidance via its interaction with UNC5D, and possibly also other UNC-5 family members. Plays a role in fibroblast growth factor-mediated signaling cascades. Required for normal organization of the cardiac basement membrane during embryogenesis, and for normal embryonic epicardium and heart morphogenesis. The protein is Leucine-rich repeat transmembrane protein FLRT2 of Mus musculus (Mouse).